The chain runs to 544 residues: Probable protein kinase UbiB (544 aa).

A Protein kinase domain is found at 123–501; it reads DFDIKPLASA…KRQQGTGKFL (379 aa). Residues 129-137 and lysine 152 each bind ATP; that span reads LASASIAQV. Aspartate 287 acts as the Proton acceptor in catalysis. The next 2 helical transmembrane spans lie at 496 to 516 and 519 to 539; these read GTGK…AIWI and QLEP…LLSW.

Belongs to the ABC1 family. UbiB subfamily.

It localises to the cell inner membrane. It functions in the pathway cofactor biosynthesis; ubiquinone biosynthesis [regulation]. In terms of biological role, is probably a protein kinase regulator of UbiI activity which is involved in aerobic coenzyme Q (ubiquinone) biosynthesis. This Vibrio cholerae serotype O1 (strain ATCC 39315 / El Tor Inaba N16961) protein is Probable protein kinase UbiB.